We begin with the raw amino-acid sequence, 164 residues long: ATP synthase subunit b 2 (164 aa).

Residues 4–24 (TFWAFVGLVLFLALLVYFEVP) form a helical membrane-spanning segment.

This sequence belongs to the ATPase B chain family. As to quaternary structure, F-type ATPases have 2 components, F(1) - the catalytic core - and F(0) - the membrane proton channel. F(1) has five subunits: alpha(3), beta(3), gamma(1), delta(1), epsilon(1). F(0) has three main subunits: a(1), b(2) and c(10-14). The alpha and beta chains form an alternating ring which encloses part of the gamma chain. F(1) is attached to F(0) by a central stalk formed by the gamma and epsilon chains, while a peripheral stalk is formed by the delta and b chains.

Its subcellular location is the cell inner membrane. Its function is as follows. F(1)F(0) ATP synthase produces ATP from ADP in the presence of a proton or sodium gradient. F-type ATPases consist of two structural domains, F(1) containing the extramembraneous catalytic core and F(0) containing the membrane proton channel, linked together by a central stalk and a peripheral stalk. During catalysis, ATP synthesis in the catalytic domain of F(1) is coupled via a rotary mechanism of the central stalk subunits to proton translocation. Functionally, component of the F(0) channel, it forms part of the peripheral stalk, linking F(1) to F(0). The protein is ATP synthase subunit b 2 of Bartonella henselae (strain ATCC 49882 / DSM 28221 / CCUG 30454 / Houston 1) (Rochalimaea henselae).